Reading from the N-terminus, the 54-residue chain is Ovomucoid (54 aa).

One can recognise a Kazal-like domain in the interval 4-54 (VDCSDYPKPVCTLEDMPLCGSDNITYHNKCYFCNAVAHSNGTLTFSHFGKC). 3 disulfide bridges follow: C6/C36, C14/C33, and C22/C54. A glycan (N-linked (GlcNAc...) asparagine) is linked at N43.

It localises to the secreted. This is Ovomucoid from Carpococcyx renauldi (Coral-billed ground-cuckoo).